A 396-amino-acid chain; its full sequence is Beta-peptidyl aminopeptidase BapA (396 aa).

The signal sequence occupies residues 1 to 21 (MHYLKFPAIIAGMLLAGAASA). Ser271 functions as the Nucleophile in the catalytic mechanism. Catalysis depends on proton donor/acceptor residues Ser309 and Asp311.

It belongs to the peptidase S58 family. Heterooctamer of 4 heterodimers ((alpha:beta)4); each heterodimer is composed of an alpha subunit and a beta subunit processed from the same precursor. Autoproteolytic processing to generate the alpha and beta subunit is required for self-activation and is proposed to use a similar mechanism as substrate cleavage.

It is found in the periplasm. The enzyme catalyses Cleaves N-terminal beta-homoamino acids from peptides composed of 2 to 6 amino acids.. Its activity is regulated as follows. Inhibited by AEBSF (4-(2-aminoethyl)benzenesulfonyl fluoride, Pefabloc SC). Its function is as follows. Beta-aminopeptidase that can cleave synthetic beta-peptides which consist of backbone-elongated beta-amino acid residues that are not processed by common proteolytic enzymes. Can cleave the beta-peptides beta-homoVal-beta-homoAla-beta-homoLeu and beta-homoAla-beta-homoLeu. Requires a beta-amino acid at the N-terminus of peptide substrates and cleaves the peptide bond between the N-terminal beta-amino acid and the amino acid at the second position of tripeptidic substrates of the general structure H-betahXaa-Ile-betahTyr-OH according to the following preferences with regard to the side chain of the N-terminal beta-amino acid: aliphatic and aromatic &gt; OH-containing &gt; hydrogen, basic and polar. beta-homoVal-beta-homoAla-beta-homoLeu and beta-homoAla-beta-homoLeu. This chain is Beta-peptidyl aminopeptidase BapA, found in Sphingosinicella microcystinivorans.